The sequence spans 336 residues: tRNA N6-adenosine threonylcarbamoyltransferase (336 aa).

Residues His112 and His116 each contribute to the Fe cation site. Substrate is bound by residues 136-140 (LVSGG), Asp169, Gly182, and Asn276. Residue Asp304 participates in Fe cation binding.

Belongs to the KAE1 / TsaD family. The cofactor is Fe(2+).

The protein resides in the cytoplasm. It carries out the reaction L-threonylcarbamoyladenylate + adenosine(37) in tRNA = N(6)-L-threonylcarbamoyladenosine(37) in tRNA + AMP + H(+). In terms of biological role, required for the formation of a threonylcarbamoyl group on adenosine at position 37 (t(6)A37) in tRNAs that read codons beginning with adenine. Is involved in the transfer of the threonylcarbamoyl moiety of threonylcarbamoyl-AMP (TC-AMP) to the N6 group of A37, together with TsaE and TsaB. TsaD likely plays a direct catalytic role in this reaction. This chain is tRNA N6-adenosine threonylcarbamoyltransferase, found in Francisella tularensis subsp. tularensis (strain FSC 198).